The chain runs to 221 residues: Aspartic protease inhibitor 1 (221 aa).

Residues 1–23 (MMKCLFFLCLCLFPILVFSSTFT) form the signal peptide. Residues 24–32 (SQNPINLPS) constitute a propeptide that is removed on maturation. A Vacuolar targeting signal motif is present at residues 26–31 (NPINLP). N-linked (GlcNAc...) asparagine glycosylation is present at Asn-51. Intrachain disulfides connect Cys-80–Cys-125 and Cys-174–Cys-186.

This sequence belongs to the protease inhibitor I3 (leguminous Kunitz-type inhibitor) family. As to expression, tubers, young leaves and flower bud. Not detected in root, stem or mature leaves.

Its subcellular location is the vacuole. Functionally, inhibitor of cathepsin D (aspartic protease). May also inhibit trypsin and chymotrypsin (serine proteases). Protects the plant by inhibiting proteases of invading organisms. The protein is Aspartic protease inhibitor 1 of Solanum tuberosum (Potato).